The chain runs to 428 residues: GTPase Obg (428 aa).

One can recognise an Obg domain in the interval 1 to 158 (MFVDKVKVYA…RNLLLELKVL (158 aa)). In terms of domain architecture, OBG-type G spans 159–329 (ADVGLVGFPS…LMLAIADELE (171 aa)). GTP is bound by residues 165–172 (GFPSVGKS), 190–194 (FTTIT), 212–215 (DLPG), 282–285 (NKMD), and 310–312 (SAI). The Mg(2+) site is built by Ser172 and Thr192. The region spanning 350-428 (KHELPIEPFT…IMKFEFEFVE (79 aa)) is the OCT domain.

The protein belongs to the TRAFAC class OBG-HflX-like GTPase superfamily. OBG GTPase family. In terms of assembly, monomer. Requires Mg(2+) as cofactor.

Its subcellular location is the cytoplasm. An essential GTPase which binds GTP, GDP and possibly (p)ppGpp with moderate affinity, with high nucleotide exchange rates and a fairly low GTP hydrolysis rate. Plays a role in control of the cell cycle, stress response, ribosome biogenesis and in those bacteria that undergo differentiation, in morphogenesis control. This Shouchella clausii (strain KSM-K16) (Alkalihalobacillus clausii) protein is GTPase Obg.